The primary structure comprises 239 residues: Small ribosomal subunit protein uS3 (239 aa).

The region spanning 39–107 is the KH type-2 domain; that stretch reads IREFIKEECK…ELHLNIVEVR (69 aa). The segment covering 212–221 has biased composition (basic and acidic residues); the sequence is PQARDRKAQE. The tract at residues 212–239 is disordered; the sequence is PQARDRKAQELQDGPAPRGAGGNRRGDR. The segment covering 230-239 has biased composition (gly residues); the sequence is GAGGNRRGDR.

The protein belongs to the universal ribosomal protein uS3 family. As to quaternary structure, part of the 30S ribosomal subunit. Forms a tight complex with proteins S10 and S14.

Binds the lower part of the 30S subunit head. Binds mRNA in the 70S ribosome, positioning it for translation. In Ruegeria sp. (strain TM1040) (Silicibacter sp.), this protein is Small ribosomal subunit protein uS3.